The sequence spans 313 residues: Ribosomal RNA small subunit methyltransferase H (313 aa).

Residues 35-37, Asp55, Phe79, Asp101, and Gln108 each bind S-adenosyl-L-methionine; that span reads GGH.

It belongs to the methyltransferase superfamily. RsmH family.

The protein resides in the cytoplasm. It catalyses the reaction cytidine(1402) in 16S rRNA + S-adenosyl-L-methionine = N(4)-methylcytidine(1402) in 16S rRNA + S-adenosyl-L-homocysteine + H(+). Specifically methylates the N4 position of cytidine in position 1402 (C1402) of 16S rRNA. This chain is Ribosomal RNA small subunit methyltransferase H, found in Escherichia coli O81 (strain ED1a).